The following is a 384-amino-acid chain: Sialyltransferase-like protein 3 (384 aa).

Residues 1-5 (MKRRH) lie on the Cytoplasmic side of the membrane. A helical; Signal-anchor for type II membrane protein membrane pass occupies residues 6–26 (WSHPSCGLLLLVAVFCLLLVF). The Lumenal portion of the chain corresponds to 27–384 (RCSQLRHSGD…FRLPPVSFYR (358 aa)). Asn-241 carries N-linked (GlcNAc...) asparagine glycosylation.

This sequence belongs to the glycosyltransferase 29 family.

The protein localises to the golgi apparatus membrane. In terms of biological role, possesses sialyltransferase-like activity in vitro. Transfers sialic acid to the glycoprotein asialofetuin. The transferred sialic acid is linked to galactose of Gal-beta-1,3-GalNAc through alpha-2,6-linkage. The protein is Sialyltransferase-like protein 3 of Oryza sativa subsp. indica (Rice).